A 433-amino-acid polypeptide reads, in one-letter code: Acetylcholine receptor-like protein cup-4 (433 aa).

Residues 1 to 24 (MKIIIFVCFILIFYLPIQKKHVNS) form the signal peptide. 2 N-linked (GlcNAc...) asparagine glycosylation sites follow: Asn41 and Asn68. The cysteines at positions 178 and 192 are disulfide-linked. 2 N-linked (GlcNAc...) asparagine glycosylation sites follow: Asn237 and Asn249. A run of 4 helical transmembrane segments spans residues 282 to 302 (EAAV…TFFI), 307 to 327 (STFL…HDLV), 337 to 357 (IPFC…TLVL), and 413 to 433 (PIIG…CLLL).

Belongs to the ligand-gated ion channel (TC 1.A.9) family. Acetylcholine receptor (TC 1.A.9.1) subfamily. Expressed in coelomocytes.

Its subcellular location is the cytoplasmic vesicle membrane. Its function is as follows. Thought to regulate endocytosis in coelomocytes through modulation of phospholipase C activity. Possible acetylcholine receptor. The polypeptide is Acetylcholine receptor-like protein cup-4 (cup-4) (Caenorhabditis elegans).